Consider the following 101-residue polypeptide: NADH-quinone oxidoreductase subunit K (101 aa).

3 consecutive transmembrane segments (helical) span residues 4–24 (LAHY…GIFL), 30–50 (IVLL…FVAF), and 61–81 (VFVF…LAIL).

It belongs to the complex I subunit 4L family. As to quaternary structure, NDH-1 is composed of 14 different subunits. Subunits NuoA, H, J, K, L, M, N constitute the membrane sector of the complex.

It localises to the cell inner membrane. It catalyses the reaction a quinone + NADH + 5 H(+)(in) = a quinol + NAD(+) + 4 H(+)(out). In terms of biological role, NDH-1 shuttles electrons from NADH, via FMN and iron-sulfur (Fe-S) centers, to quinones in the respiratory chain. The immediate electron acceptor for the enzyme in this species is believed to be ubiquinone. Couples the redox reaction to proton translocation (for every two electrons transferred, four hydrogen ions are translocated across the cytoplasmic membrane), and thus conserves the redox energy in a proton gradient. In Ralstonia nicotianae (strain ATCC BAA-1114 / GMI1000) (Ralstonia solanacearum), this protein is NADH-quinone oxidoreductase subunit K.